The following is a 330-amino-acid chain: Olfactory receptor 1P1 (330 aa).

Residues 1–39 (MGLTQDFFPPTSELLEGGNQTSTFEFLLWGLSDQPQQQH) lie on the Extracellular side of the membrane. An N-linked (GlcNAc...) asparagine glycan is attached at N19. A helical membrane pass occupies residues 40–60 (IFFLLFLWMYVVTVAGNLLIV). At 61–71 (LAIGTDTHLHT) the chain is on the cytoplasmic side. The helical transmembrane segment at 72–92 (PMYFFLASLSCADIFSTSTTV) threads the bilayer. Residues 93-111 (PKALVNIQTQSRSISYAGC) are Extracellular-facing. A disulfide bridge links C111 with C192. A helical membrane pass occupies residues 112–132 (LAQLYFFLTFGDMDIFLPATM). Residues 133 to 137 (AYDRY) lie on the Cytoplasmic side of the membrane. Residues 138-158 (VAICHLLHYMMIMSLHRCAFL) traverse the membrane as a helical segment. The Extracellular portion of the chain corresponds to 159–209 (VTACWTLTSLLAMTRTFLIFRLSLCSKILPGFFCDLGPLMKVSCSDAQVNE). Residues 210-230 (LVLLFLGGAVILIPFMLILVS) traverse the membrane as a helical segment. The Cytoplasmic portion of the chain corresponds to 231–257 (YIRIVSAILRAPSAQGRRKAFSTCDSH). A helical transmembrane segment spans residues 258-278 (LVVVALFFGTVIRAYLCPSSS). Topologically, residues 279–286 (SSNSVKED) are extracellular. A helical transmembrane segment spans residues 287–307 (TAAAVMYTVVTPLLNPFIYSM). The Cytoplasmic portion of the chain corresponds to 308–330 (RNKDMKAAVVRLLKGRVSFSQGQ).

It belongs to the G-protein coupled receptor 1 family.

The protein localises to the cell membrane. In terms of biological role, odorant receptor. This chain is Olfactory receptor 1P1 (OR1P1), found in Homo sapiens (Human).